The chain runs to 98 residues: Plastocyanin (98 aa).

The region spanning 1 to 98 (DVTVKLGADS…AGMKGTITVQ (98 aa)) is the Plastocyanin-like domain. Cu cation contacts are provided by histidine 38, cysteine 83, histidine 86, and methionine 91.

It belongs to the plastocyanin family. The cofactor is Cu(2+).

Its subcellular location is the plastid. The protein resides in the chloroplast thylakoid membrane. Functionally, participates in electron transfer between P700 and the cytochrome b6-f complex in photosystem I. The sequence is that of Plastocyanin (petE) from Scenedesmus fuscus (Green alga).